A 347-amino-acid polypeptide reads, in one-letter code: NADH-ubiquinone oxidoreductase chain 2 (347 aa).

10 helical membrane passes run 13–33 (IFAGTFITVLSSHWFFTWVGL), 55–75 (AAIKYFLTQATASMILLMAIL), 96–116 (LMIMTAMAMKLGMAPFHFWVP), 123–143 (PLMSGLLLLTWQKLAPISIMY), 149–169 (LNVNLLLTLSILSIMAGSWGG), 178–198 (ILAYSSITHMGWMMAVLPYNP), 201–221 (TILNLTIYIILTTTTFLLLNL), 247–267 (TLLSLGGLPPLTGFLPKWVII), 274–294 (NSLIIPTTMAIITLLNLYFYL), and 326–346 (LPTLITLTTLLLPISPFMLMI).

It belongs to the complex I subunit 2 family. As to quaternary structure, core subunit of respiratory chain NADH dehydrogenase (Complex I) which is composed of 45 different subunits. Interacts with TMEM242.

Its subcellular location is the mitochondrion inner membrane. The catalysed reaction is a ubiquinone + NADH + 5 H(+)(in) = a ubiquinol + NAD(+) + 4 H(+)(out). Functionally, core subunit of the mitochondrial membrane respiratory chain NADH dehydrogenase (Complex I) which catalyzes electron transfer from NADH through the respiratory chain, using ubiquinone as an electron acceptor. Essential for the catalytic activity and assembly of complex I. The chain is NADH-ubiquinone oxidoreductase chain 2 from Pan paniscus (Pygmy chimpanzee).